An 866-amino-acid polypeptide reads, in one-letter code: Dynamin-2 (866 aa).

Positions 28-294 (HLDLPQIAVV…LTNHIRESLP (267 aa)) constitute a Dynamin-type G domain. The interval 38 to 45 (GGQSAGKS) is G1 motif. GDP is bound by residues Ser41, Gly43, Lys44, Ser45, Ser46, Arg59, and Gly60. Residues 64-66 (VTR) form a G2 motif region. Residues 136 to 139 (DLPG) form a G3 motif region. Residues 205–208 (TKLD) are G4 motif. Lys206, Asp208, and Asp211 together coordinate GDP. Residue Tyr231 is modified to Phosphotyrosine. Positions 235 to 238 (VNRS) are G5 motif. Residues Asn236, Arg237, and Gln239 each coordinate GDP. An N6-acetyllysine modification is found at Lys299. Residues 515-621 (QVIRRGWLTI…WKASFLRAGV (107 aa)) form the PH domain. The residue at position 593 (Tyr593) is a Phosphotyrosine. N6-acetyllysine is present on Lys594. The GED domain occupies 649–740 (VETIRNLVDS…IIGDISTSTV (92 aa)). The segment at 737-866 (TSTVSTPVPP…IRPAEPSLLD (130 aa)) is disordered. Position 751 is a phosphothreonine (Thr751). Over residues 752–763 (WIQNTSSHSPTP) the composition is skewed to polar residues. Position 760 is a phosphoserine; by CDK1 (Ser760). 3 stretches are compositionally biased toward pro residues: residues 784-794 (TPGPPLIPVPV), 802-811 (PPIPSRPGPH), and 822-851 (SAPP…PAAP).

This sequence belongs to the TRAFAC class dynamin-like GTPase superfamily. Dynamin/Fzo/YdjA family. In terms of assembly, oligomerizes into a helical polymer that self-assembles around the vesicle membrane, when associated to the menbrane through lipid binding. Interacts with SHANK1 and SHANK2. Interacts with SNX9. Interacts (via C-terminal proline-rich domain (PRD)) with SNX18 (via SH3 domain); this interaction regulates ATG9A and ATG16L1 trafficking from recycling endosomes to sites of autophagosome formation. Interacts with SNX33 (via SH3 domain). Interacts with MYO1E (via SH3 domain). Interacts with PSTPIP1 (via SH3 domain). Interacts with CTNND2. Interacts (via C-terminal proline-rich domain (PRD)) with BIN1 (via SH3 domain); this interaction allows the recruitment of DNM2 to the membrane tubules and inhibits self-assembly-stimulated GTPase activity on the membrane. Interacts with GABARAP, GABARAPL1 and GABARAPL2. Interacts with MAP1LC3B (the lipidate and non-lipidated LC3 form); this interaction mediates recycling endosome scission leading to autophagosome release. Interacts with ITSN1. Interacts with MYOF. Interacts (via C-terminal proline-rich domain (PRD)) with SH3BP4 (via SH3 domain); this interaction controls the GTPase activity and is prevented by EGFR-induced tyrosine phosphorylation of either DNM2 or SH3BP4. May interact with PIK3C3. May be a component of a complex composed of RAB5A (in GDP-bound form), DYN2 and PIK3C3. Interacts with SDC4; this interaction is markedly enhanced at focal ahesion site upon induction of focal adhesions and stress-fiber formation. Interacts with ACTN1. Interacts with CTTN; this interaction stimulates the intrinsic GTPase activity of DNM2 and stabilizes the association of DNM2 and actin filaments; in addition this interaction is stimulated by ligand binding to the receptor, leading to the recruitment of the DNM2-CTTN complex to the sequestered receptor-ligand complex to its internalization. Interacts with NOSTRIN (via SH3 domain); this interaction allows the recruitment of NOS3 to dynamin-positive structures. Interacts with TUBG1; this interaction may participate in centrosome cohesion. Post-translationally, phosphorylation at Ser-844 by GSK3-alpha relieves the inhibition of BIN1 and promotes endocytosis. Phosphorylation at Ser-760 by CDK1 is greatly increased upon mitotic entry. It regulates cytokinesis downstream of calcineurin, and does not affect clathrin-mediated endocytosis. Dephosphorylated by calcineurin/PP2 during cytokinesis in a Ca(2+)- and calmodulin-dependent manner. Phosphorylated on tyrosine residues by EGFR and after activation of SRC.

Its subcellular location is the cytoplasm. The protein resides in the cytoskeleton. It is found in the cytoplasmic vesicle. The protein localises to the clathrin-coated vesicle. It localises to the cell projection. Its subcellular location is the uropodium. The protein resides in the endosome. It is found in the microtubule organizing center. The protein localises to the centrosome. It localises to the centriole. Its subcellular location is the recycling endosome. The protein resides in the phagocytic cup. It is found in the phagosome membrane. The protein localises to the podosome. It localises to the cell junction. Its subcellular location is the postsynaptic density. The protein resides in the synapse. It is found in the synaptosome. The protein localises to the midbody. It localises to the membrane. Its subcellular location is the clathrin-coated pit. The catalysed reaction is GTP + H2O = GDP + phosphate + H(+). Its function is as follows. Catalyzes the hydrolysis of GTP and utilizes this energy to mediate vesicle scission at plasma membrane during endocytosis and filament remodeling at many actin structures during organization of the actin cytoskeleton. Plays an important role in vesicular trafficking processes, namely clathrin-mediated endocytosis (CME), exocytic and clathrin-coated vesicle from the trans-Golgi network, and PDGF stimulated macropinocytosis. During vesicular trafficking process, associates to the membrane, through lipid binding, and self-assembles into ring-like structure through oligomerization to form a helical polymer around the vesicle membrane and leading to vesicle scission. Plays a role in organization of the actin cytoskeleton by mediating arrangement of stress fibers and actin bundles in podocytes. During organization of the actin cytoskeleton, self-assembles into ring-like structure that directly bundles actin filaments to form typical membrane tubules decorated with dynamin spiral polymers. Self-assembly increases GTPase activity and the GTP hydrolysis causes the rapid depolymerization of dynamin spiral polymers, and results in dispersion of actin bundles. Remodels, through its interaction with CTTN, bundled actin filaments in a GTPase-dependent manner and plays a role in orchestrating the global actomyosin cytoskeleton. The interaction with CTTN stabilizes the interaction of DNM2 and actin filaments and stimulates the intrinsic GTPase activity that results in actin filament-barbed ends and increases the sensitivity of filaments in bundles to the actin depolymerizing factor, CFL1. Plays a role in the autophagy process, by participating in the formation of ATG9A vesicles destined for the autophagosomes through its interaction with SNX18, by mediating recycling endosome scission leading to autophagosome release through MAP1LC3B interaction. Also regulates maturation of apoptotic cell corpse-containing phagosomes by recruiting PIK3C3 to the phagosome membrane. Also plays a role in cytokinesis. May participate in centrosome cohesion through its interaction with TUBG1. Plays a role in the regulation of neuron morphology, axon growth and formation of neuronal growth cones. Involved in membrane tubulation. The sequence is that of Dynamin-2 from Bos taurus (Bovine).